The following is a 420-amino-acid chain: MPEDGPPKDIPDGLIEELALRAFFHDYCVVPVNTALSRGYLGGLEPMVHRLGLQSPVANACKAVAFASHGLKLSRPFLTKKGEILYHELLGSLARSIQNPALGAGPDIVVTAVLLGLYEMIMAGESNPGHHNAHAGGMAAILQIENSPLGLLQAARAGHPLVLNRMVQNNGMFISPSPGGGGQSLDTILVKLGSLWQKSETLLSNPQIPLFFDELYALREETTALNRDLILWQKAQSDNFKPTKVGYLSPSPYQLSPSAGFWPGQVDTYVDLYVAGVWNVSRVARCFLINLIVRLSNILDPTSDHRQYHNDVRELVGDIFASIPFHLTEDLGAFVAKRGANPEIANPGRPVGGLILLHPVYIASQLPVVPPDMQEYMRKCLAWIGKYMGIGQACLLAKAPRVEGQYFACGCMLVWAGLLI.

Its subcellular location is the nucleus. Functionally, transcription factor that coregulates the expression of the gene cluster that mediates the biosynthesis of the antibiotic 2,4- dihydroxy-3-methyl-6-(2-oxopropyl)benzaldehyde (DHMBA) and its derivatives. Specifically positively regulates the expression of the FAD-dependent oxidoreductase dbaF. The protein is Transcription factor dbaG of Emericella nidulans (strain FGSC A4 / ATCC 38163 / CBS 112.46 / NRRL 194 / M139) (Aspergillus nidulans).